The primary structure comprises 490 residues: GTPase Der (490 aa).

2 EngA-type G domains span residues proline 3–aspartate 166 and isoleucine 196–valine 369. GTP is bound by residues glycine 9 to serine 16, aspartate 56 to isoleucine 60, and asparagine 118 to aspartate 121. Positions phenylalanine 162–glycine 189 are disordered. A compositionally biased stretch (acidic residues) spans arginine 164 to glycine 181. GTP contacts are provided by residues glycine 202–serine 209, aspartate 249–valine 253, and asparagine 314–aspartate 317. The KH-like domain occupies threonine 370–glutamate 454. The disordered stretch occupies residues glycine 453 to lysine 490. The segment covering asparagine 470–lysine 490 has biased composition (basic residues).

It belongs to the TRAFAC class TrmE-Era-EngA-EngB-Septin-like GTPase superfamily. EngA (Der) GTPase family. In terms of assembly, associates with the 50S ribosomal subunit.

In terms of biological role, GTPase that plays an essential role in the late steps of ribosome biogenesis. The chain is GTPase Der from Pseudomonas fluorescens (strain Pf0-1).